A 209-amino-acid polypeptide reads, in one-letter code: Na(+)-translocating NADH-quinone reductase subunit D (209 aa).

A run of 5 helical transmembrane segments spans residues 42–62 (LVMTLAVTLVTAFSSFFISLI), 66–86 (IPNSVRIIVQMVIIASLVIVV), 103–123 (VFVGLIITNCIVMGRAEAYAM), 131–151 (FMDGIGNGLGYGVILVLVGFV), and 178–198 (NGLFLLAPSAFFIIGLLIWGL).

It belongs to the NqrDE/RnfAE family. In terms of assembly, composed of six subunits; NqrA, NqrB, NqrC, NqrD, NqrE and NqrF.

The protein resides in the cell inner membrane. The enzyme catalyses a ubiquinone + n Na(+)(in) + NADH + H(+) = a ubiquinol + n Na(+)(out) + NAD(+). NQR complex catalyzes the reduction of ubiquinone-1 to ubiquinol by two successive reactions, coupled with the transport of Na(+) ions from the cytoplasm to the periplasm. NqrA to NqrE are probably involved in the second step, the conversion of ubisemiquinone to ubiquinol. This Yersinia pseudotuberculosis serotype O:1b (strain IP 31758) protein is Na(+)-translocating NADH-quinone reductase subunit D.